The following is a 71-amino-acid chain: MKRKIVQNCTNDEFEDVLFDPNLVVVQKEHTSKFTHLTSVYVYEKVGDKQPIYGVFREITEDGTTYWKEIY.

Its function is as follows. Plays a role in the processing of a cluster of viral tRNAs. The polypeptide is Protein cef (cef) (Escherichia coli (Bacteriophage T4)).